The following is a 131-amino-acid chain: Holo-[acyl-carrier-protein] synthase (131 aa).

Positions 8 and 59 each coordinate Mg(2+).

It belongs to the P-Pant transferase superfamily. AcpS family. The cofactor is Mg(2+).

The protein resides in the cytoplasm. The enzyme catalyses apo-[ACP] + CoA = holo-[ACP] + adenosine 3',5'-bisphosphate + H(+). In terms of biological role, transfers the 4'-phosphopantetheine moiety from coenzyme A to a Ser of acyl-carrier-protein. The chain is Holo-[acyl-carrier-protein] synthase from Rickettsia africae (strain ESF-5).